Consider the following 564-residue polypeptide: Carbamoyl phosphate synthase large chain, N-terminal section (564 aa).

Positions 1-399 (MPETPNKVLI…ALQKAIRSLE (399 aa)) are carboxyphosphate synthetic domain. ATP is bound by residues Arg127, Arg167, Gly173, Gly174, Glu206, Val208, Glu213, Gly239, Val240, His241, Gln282, and Glu296. The region spanning 131–325 (RAFMKKIGEP…IARIAAKIAI (195 aa)) is the ATP-grasp domain. Gln282, Glu296, and Asn298 together coordinate Mg(2+). Mn(2+)-binding residues include Gln282, Glu296, and Asn298. Residues 400–560 (IGEPGLGPSP…YSTYEEECEA (161 aa)) form an oligomerization domain region.

It belongs to the CarB family. Composed of two chains; the small (or glutamine) chain promotes the hydrolysis of glutamine to ammonia, which is used by the large (or ammonia) chain to synthesize carbamoyl phosphate. Tetramer of heterodimers (alpha,beta)4. Mg(2+) is required as a cofactor. Requires Mn(2+) as cofactor.

The enzyme catalyses hydrogencarbonate + L-glutamine + 2 ATP + H2O = carbamoyl phosphate + L-glutamate + 2 ADP + phosphate + 2 H(+). The catalysed reaction is hydrogencarbonate + NH4(+) + 2 ATP = carbamoyl phosphate + 2 ADP + phosphate + 2 H(+). The protein operates within amino-acid biosynthesis; L-arginine biosynthesis; carbamoyl phosphate from bicarbonate: step 1/1. It participates in pyrimidine metabolism; UMP biosynthesis via de novo pathway; (S)-dihydroorotate from bicarbonate: step 1/3. Functionally, large subunit of the glutamine-dependent carbamoyl phosphate synthetase (CPSase). CPSase catalyzes the formation of carbamoyl phosphate from the ammonia moiety of glutamine, carbonate, and phosphate donated by ATP, constituting the first step of 2 biosynthetic pathways, one leading to arginine and/or urea and the other to pyrimidine nucleotides. The large subunit (synthetase) binds the substrates ammonia (free or transferred from glutamine from the small subunit), hydrogencarbonate and ATP and carries out an ATP-coupled ligase reaction, activating hydrogencarbonate by forming carboxy phosphate which reacts with ammonia to form carbamoyl phosphate. This Methanopyrus kandleri (strain AV19 / DSM 6324 / JCM 9639 / NBRC 100938) protein is Carbamoyl phosphate synthase large chain, N-terminal section (carB1).